Here is a 1201-residue protein sequence, read N- to C-terminus: uncharacterized protein (1201 aa).

Residues 140-160 (IIINLIFFFAFIIVGIYLFKP) traverse the membrane as a helical segment. 2 coiled-coil regions span residues 420–459 (QKKQ…AELN) and 536–574 (AIKA…ITKM).

The protein localises to the cell membrane. This is an uncharacterized protein from Bacillus subtilis (strain 168).